A 109-amino-acid polypeptide reads, in one-letter code: A-type ATP synthase subunit F (109 aa).

The protein belongs to the V-ATPase F subunit family. In terms of assembly, has multiple subunits with at least A(3), B(3), C, D, E, F, H, I and proteolipid K(x).

Its subcellular location is the cell membrane. Component of the A-type ATP synthase that produces ATP from ADP in the presence of a proton gradient across the membrane. The chain is A-type ATP synthase subunit F from Halorubrum lacusprofundi (strain ATCC 49239 / DSM 5036 / JCM 8891 / ACAM 34).